The primary structure comprises 413 residues: Eukaryotic initiation factor 4A-9 (413 aa).

Residues 40 to 68 carry the Q motif motif; that stretch reads HSFDAMGLKENLLRGIYAYGFEKPSAIQQ. The Helicase ATP-binding domain maps to 71–241; sequence IVPFCKGLDV…RKFMNKPVRI (171 aa). 84 to 91 is an ATP binding site; it reads AQSGTGKT. Residues 189–192 carry the DEAD box motif; the sequence is DEAD. The 162-residue stretch at 252 to 413 folds into the Helicase C-terminal domain; sequence GIKQFYVNVD…ELPANVADLL (162 aa).

Belongs to the DEAD box helicase family. eIF4A subfamily. In terms of assembly, eIF4F is a multi-subunit complex, the composition of which varies with external and internal environmental conditions. It is composed of at least EIF4A, EIF4E and EIF4G.

The enzyme catalyses ATP + H2O = ADP + phosphate + H(+). Its function is as follows. ATP-dependent RNA helicase which is a subunit of the eIF4F complex involved in cap recognition and is required for mRNA binding to ribosome. In the current model of translation initiation, eIF4A unwinds RNA secondary structures in the 5'-UTR of mRNAs which is necessary to allow efficient binding of the small ribosomal subunit, and subsequent scanning for the initiator codon. In Nicotiana tabacum (Common tobacco), this protein is Eukaryotic initiation factor 4A-9.